We begin with the raw amino-acid sequence, 294 residues long: ATP phosphoribosyltransferase (294 aa).

It belongs to the ATP phosphoribosyltransferase family. Long subfamily. Requires Mg(2+) as cofactor.

It localises to the cytoplasm. The enzyme catalyses 1-(5-phospho-beta-D-ribosyl)-ATP + diphosphate = 5-phospho-alpha-D-ribose 1-diphosphate + ATP. Its pathway is amino-acid biosynthesis; L-histidine biosynthesis; L-histidine from 5-phospho-alpha-D-ribose 1-diphosphate: step 1/9. Its activity is regulated as follows. Feedback inhibited by histidine. Its function is as follows. Catalyzes the condensation of ATP and 5-phosphoribose 1-diphosphate to form N'-(5'-phosphoribosyl)-ATP (PR-ATP). Has a crucial role in the pathway because the rate of histidine biosynthesis seems to be controlled primarily by regulation of HisG enzymatic activity. This Prosthecochloris aestuarii (strain DSM 271 / SK 413) protein is ATP phosphoribosyltransferase.